The sequence spans 95 residues: Defensin (95 aa).

Positions 1 to 17 (MKNYVFALLVVTAVAIA) are cleaved as a signal peptide. Residues 18 to 55 (LPNEDKNAPMRVHLLPQKEDESLKLEVTPVKEHHRTRR) constitute a propeptide that is removed on maturation. 3 disulfides stabilise this stretch: Cys-58–Cys-85, Cys-71–Cys-91, and Cys-75–Cys-93.

This sequence belongs to the invertebrate defensin family. Type 1 subfamily.

It localises to the secreted. In terms of biological role, antibacterial peptide mostly active against Gram-positive bacteria. This is Defensin from Formica aquilonia (Red wood ant).